The following is a 468-amino-acid chain: MTATPWSARFEAGLHPTVAAFNASIGFDIELIEYDLSGSAAHARMLAHSGILSEAEAEALVGGLEQIRSEWRTGQFRPGLEQEDVHYAVERRLVELVGEVGKKLHTARSRNDQVGTDLRLWLRERIDRIVGRLGVFQRTLLDLAACHVETLIPGYTHLQRAQPVSLAHHLLAYIEMGERDIERLTQIRERVNVCPLGSGALAGTVLPIDRHYTARLLGFVALSENSLDAVSDRDYVVEFLAAASLIAVHLSRLSEEIILWASQEFRFLTLTDRCATGSSLMPQKKNPDVPELVRGKTGRIFGHLMGMLTVLKGLPLAYNKDLQEDKEGIFDAARSVESSLEAMTILMAEGIVFQPDRLAGAVEEDFSNATDAADYLVRKGVPFREAYGVIGAVVKHCLKSNALLRDLPIAQWRHFHPAFDDDLYAAITPRTVVAARNSYGGTGFEQVRAALGRAEARWQGHFPSASAH.

It belongs to the lyase 1 family. Argininosuccinate lyase subfamily.

It localises to the cytoplasm. The enzyme catalyses 2-(N(omega)-L-arginino)succinate = fumarate + L-arginine. The protein operates within amino-acid biosynthesis; L-arginine biosynthesis; L-arginine from L-ornithine and carbamoyl phosphate: step 3/3. In Gloeobacter violaceus (strain ATCC 29082 / PCC 7421), this protein is Argininosuccinate lyase.